Here is an 876-residue protein sequence, read N- to C-terminus: Alanine--tRNA ligase (876 aa).

Zn(2+) is bound by residues His563, His567, Cys665, and His669.

The protein belongs to the class-II aminoacyl-tRNA synthetase family. It depends on Zn(2+) as a cofactor.

It is found in the cytoplasm. The enzyme catalyses tRNA(Ala) + L-alanine + ATP = L-alanyl-tRNA(Ala) + AMP + diphosphate. Functionally, catalyzes the attachment of alanine to tRNA(Ala) in a two-step reaction: alanine is first activated by ATP to form Ala-AMP and then transferred to the acceptor end of tRNA(Ala). Also edits incorrectly charged Ser-tRNA(Ala) and Gly-tRNA(Ala) via its editing domain. In Shouchella clausii (strain KSM-K16) (Alkalihalobacillus clausii), this protein is Alanine--tRNA ligase.